Reading from the N-terminus, the 793-residue chain is Ferredoxin/F(420)H(2)-dependent CoB-CoM heterodisulfide reductase subunit A (793 aa).

Position 147–170 (147–170) interacts with FAD; sequence GGGVAGIEAALNLAEAGFPVTMVE. 4 consecutive 4Fe-4S ferredoxin-type domains span residues 233 to 264, 282 to 311, 571 to 600, and 601 to 629; these read RKPRFVLEDKCKGCVDLCSGVCPVEIENPMNY, QVVLIDPDHCVGCGLCQLACPAEAVDYEQK, MGAHVDPDKCIGCRTCVEVCKFGKISIENK, and KAVVDEVSCYGCGDCSAACPVGAIQMRNF. [4Fe-4S] cluster contacts are provided by cysteine 243, cysteine 246, cysteine 250, cysteine 254, cysteine 291, cysteine 294, cysteine 297, cysteine 301, cysteine 580, cysteine 583, cysteine 586, cysteine 590, cysteine 609, cysteine 612, cysteine 615, and cysteine 619.

Belongs to the HdrA family. In terms of assembly, the ferredoxin/F(420)H(2)-dependent CoB-CoM heterodisulfide reductase is composed of three subunits; HdrA2, HdrB2 and HdrC2. [4Fe-4S] cluster serves as cofactor. It depends on [2Fe-2S] cluster as a cofactor. Requires FAD as cofactor.

It localises to the cytoplasm. It carries out the reaction coenzyme B + coenzyme M + 2 oxidized [2Fe-2S]-[ferredoxin] = coenzyme M-coenzyme B heterodisulfide + 2 reduced [2Fe-2S]-[ferredoxin] + 2 H(+). It catalyses the reaction coenzyme B + 2 oxidized coenzyme F420-(gamma-L-Glu)(n) + coenzyme M + 2 reduced [2Fe-2S]-[ferredoxin] + 4 H(+) = coenzyme M-coenzyme B heterodisulfide + 2 reduced coenzyme F420-(gamma-L-Glu)(n) + 2 oxidized [2Fe-2S]-[ferredoxin]. The protein operates within cofactor metabolism; coenzyme M-coenzyme B heterodisulfide reduction; coenzyme B and coenzyme M from coenzyme M-coenzyme B heterodisulfide: step 1/1. In terms of biological role, part of a complex that catalyzes the reversible reduction of CoM-S-S-CoB to the thiol-coenzymes H-S-CoM (coenzyme M) and H-S-CoB (coenzyme B). Catalyzes the transfer of electrons from ferredoxin to CoM-S-S-CoB during methanogenesis from acetate. Electrons transfer from ferredoxin to CoM-S-S-CoB via HdrA2, HdrC2 and HdrB2. In addition, the complex can use electron bifurcation to direct electron pairs from reduced coenzyme F420 towards the reduction of both ferredoxin and CoB-CoM heterodisulfide. This activity may take place during Fe(III)-dependent anaerobic methane oxidation. This Methanosarcina acetivorans (strain ATCC 35395 / DSM 2834 / JCM 12185 / C2A) protein is Ferredoxin/F(420)H(2)-dependent CoB-CoM heterodisulfide reductase subunit A.